A 473-amino-acid polypeptide reads, in one-letter code: Fumarate hydratase class II (473 aa).

Substrate contacts are provided by residues 105 to 107 (SGT), 130 to 133 (HPND), 140 to 142 (SSN), and Thr-188. His-189 (proton donor/acceptor) is an active-site residue. The active site involves Ser-319. Residues Ser-320 and 325–327 (KVN) contribute to the substrate site.

This sequence belongs to the class-II fumarase/aspartase family. Fumarase subfamily. Homotetramer.

The protein localises to the cytoplasm. The catalysed reaction is (S)-malate = fumarate + H2O. It participates in carbohydrate metabolism; tricarboxylic acid cycle; (S)-malate from fumarate: step 1/1. In terms of biological role, involved in the TCA cycle. Catalyzes the stereospecific interconversion of fumarate to L-malate. The sequence is that of Fumarate hydratase class II from Xylella fastidiosa (strain Temecula1 / ATCC 700964).